The following is an 89-amino-acid chain: MSITAEEKTRLMKEFATKEGDTGSPEVQVAILTSRINTLTEHFKTHKKDNHGRRGLLKMVAQRRKLLDYLKGKEEARYQDLIKKLGIRR.

Belongs to the universal ribosomal protein uS15 family. As to quaternary structure, part of the 30S ribosomal subunit. Forms a bridge to the 50S subunit in the 70S ribosome, contacting the 23S rRNA.

One of the primary rRNA binding proteins, it binds directly to 16S rRNA where it helps nucleate assembly of the platform of the 30S subunit by binding and bridging several RNA helices of the 16S rRNA. In terms of biological role, forms an intersubunit bridge (bridge B4) with the 23S rRNA of the 50S subunit in the ribosome. This is Small ribosomal subunit protein uS15 from Ruegeria sp. (strain TM1040) (Silicibacter sp.).